Reading from the N-terminus, the 235-residue chain is Lipoprotein-releasing system ATP-binding protein LolD (235 aa).

Residues 7–234 (LQCTNLSKRY…QQELTLMGAR (228 aa)) enclose the ABC transporter domain. 43-50 (GSSGSGKS) contributes to the ATP binding site.

Belongs to the ABC transporter superfamily. Lipoprotein translocase (TC 3.A.1.125) family. As to quaternary structure, the complex is composed of two ATP-binding proteins (LolD) and two transmembrane proteins (LolC and LolE).

It is found in the cell inner membrane. Part of the ABC transporter complex LolCDE involved in the translocation of mature outer membrane-directed lipoproteins, from the inner membrane to the periplasmic chaperone, LolA. Responsible for the formation of the LolA-lipoprotein complex in an ATP-dependent manner. The sequence is that of Lipoprotein-releasing system ATP-binding protein LolD from Pectobacterium atrosepticum (strain SCRI 1043 / ATCC BAA-672) (Erwinia carotovora subsp. atroseptica).